Reading from the N-terminus, the 584-residue chain is MAIKLLNDNVINKIAAGEVIERPASVVKELLENAIDAASRNIAVKISGAGLDSIEVTDDGEGISMEELPLAFLRHATSKIENEGDLLRIMSMGFRGEALPSIASVSRIDIYSKKEKQEGIHCFIEGGKILDLQYFPGPEGSKIIVSDLFFNTPARKKFLRSPVTEGNNAYELVIKYALARPDIAISFSNEKRQLFRTPGNGSLNDAVIAIFGRDFLEPLIPVKWEGLSLSISGLISPPGVAKMNRKRQLIFVNQRPIRSPLLYRALDEGYRGLLLAREQPLVILQIAVPPDSIDVNVHPQKSEIRFRDEQSIFRSLCGLLRDTLNARDYRLQDNLPQNRSQPFYPAAGRKTAKQKVEEQPVIPFMHNRKADKRVEETGGEPWIPFYPEEQAEGSVSRVYDEFKILGQLWDSYILLEKEQTLNIVDQHAAHERIIYSRLQQFYAASRGEMQMLAFPLLMDLSLRDMELLEKNQEILGELGFDLQQAGPRSIFLRGTPAIIAGQEREVLFEILELLAGGQGINLKNEAIIKMACKKAVKAGTRLDYREMMQIIQELFITDDYKNCPHGRPTIIAWKQADLERMFKR.

This sequence belongs to the DNA mismatch repair MutL/HexB family.

This protein is involved in the repair of mismatches in DNA. It is required for dam-dependent methyl-directed DNA mismatch repair. May act as a 'molecular matchmaker', a protein that promotes the formation of a stable complex between two or more DNA-binding proteins in an ATP-dependent manner without itself being part of a final effector complex. The chain is DNA mismatch repair protein MutL from Syntrophomonas wolfei subsp. wolfei (strain DSM 2245B / Goettingen).